We begin with the raw amino-acid sequence, 180 residues long: Probable chorismate pyruvate-lyase (180 aa).

Substrate-binding residues include arginine 76, leucine 113, and glutamate 171.

Belongs to the UbiC family.

Its subcellular location is the cytoplasm. It catalyses the reaction chorismate = 4-hydroxybenzoate + pyruvate. Its pathway is cofactor biosynthesis; ubiquinone biosynthesis. Functionally, removes the pyruvyl group from chorismate, with concomitant aromatization of the ring, to provide 4-hydroxybenzoate (4HB) for the ubiquinone pathway. This chain is Probable chorismate pyruvate-lyase, found in Pseudoalteromonas translucida (strain TAC 125).